Here is a 354-residue protein sequence, read N- to C-terminus: Glutaminyl-peptide cyclotransferase (354 aa).

Residues 1-8 constitute a mitochondrion transit peptide; it reads MRLLLRNY. A disulfide bond links Cys136 and Cys158. Asp153 contributes to the Zn(2+) binding site. The active-site Proton acceptor is the Glu190. Glu191 provides a ligand contact to Zn(2+). The Proton acceptor role is filled by Asp228. Position 318 (His318) interacts with Zn(2+).

Belongs to the glutaminyl-peptide cyclotransferase family.

The protein resides in the secreted. The protein localises to the mitochondrion. The catalysed reaction is N-terminal L-glutaminyl-[peptide] = N-terminal 5-oxo-L-prolyl-[peptide] + NH4(+). With respect to regulation, inhibited by imidazoles (imidazole, benzimidazole, 1-benzylimidazole, 1-methylimidazole, P150/03 and N-omega-acetylhistamine) and cysteamines (cysteamine and N-dimethylcysteamine). Inhibited by PDB50 1(3,4-dimethoxyphenyl)-3-(3-imidazol-1-ylpropyl)thiourea. Its function is as follows. Acts as a glutaminyl-peptide cyclotransferase. Responsible for the biosynthesis of pyroglutamyl peptides. Might be more efficient in the conversion of tri and tetrapeptides in vitro. Might have a relative preference for substrates containing hydrophobic amino acids in vitro. This is Glutaminyl-peptide cyclotransferase from Drosophila melanogaster (Fruit fly).